A 353-amino-acid polypeptide reads, in one-letter code: DNA replication and repair protein RecF (353 aa).

30–37 (GANGQGKT) serves as a coordination point for ATP.

It belongs to the RecF family.

The protein localises to the cytoplasm. The RecF protein is involved in DNA metabolism; it is required for DNA replication and normal SOS inducibility. RecF binds preferentially to single-stranded, linear DNA. It also seems to bind ATP. The chain is DNA replication and repair protein RecF from Carboxydothermus hydrogenoformans (strain ATCC BAA-161 / DSM 6008 / Z-2901).